A 217-amino-acid polypeptide reads, in one-letter code: Thiamine-phosphate synthase (217 aa).

4-amino-2-methyl-5-(diphosphooxymethyl)pyrimidine is bound by residues 37–41 (QFREK) and Asn-72. Mg(2+) contacts are provided by Asp-73 and Asp-92. Ser-110 provides a ligand contact to 4-amino-2-methyl-5-(diphosphooxymethyl)pyrimidine. 136-138 (TVS) contributes to the 2-[(2R,5Z)-2-carboxy-4-methylthiazol-5(2H)-ylidene]ethyl phosphate binding site. Lys-139 is a binding site for 4-amino-2-methyl-5-(diphosphooxymethyl)pyrimidine. 2-[(2R,5Z)-2-carboxy-4-methylthiazol-5(2H)-ylidene]ethyl phosphate-binding positions include Gly-168 and 188–189 (IS).

Belongs to the thiamine-phosphate synthase family. It depends on Mg(2+) as a cofactor.

It catalyses the reaction 2-[(2R,5Z)-2-carboxy-4-methylthiazol-5(2H)-ylidene]ethyl phosphate + 4-amino-2-methyl-5-(diphosphooxymethyl)pyrimidine + 2 H(+) = thiamine phosphate + CO2 + diphosphate. The enzyme catalyses 2-(2-carboxy-4-methylthiazol-5-yl)ethyl phosphate + 4-amino-2-methyl-5-(diphosphooxymethyl)pyrimidine + 2 H(+) = thiamine phosphate + CO2 + diphosphate. It carries out the reaction 4-methyl-5-(2-phosphooxyethyl)-thiazole + 4-amino-2-methyl-5-(diphosphooxymethyl)pyrimidine + H(+) = thiamine phosphate + diphosphate. It participates in cofactor biosynthesis; thiamine diphosphate biosynthesis; thiamine phosphate from 4-amino-2-methyl-5-diphosphomethylpyrimidine and 4-methyl-5-(2-phosphoethyl)-thiazole: step 1/1. In terms of biological role, condenses 4-methyl-5-(beta-hydroxyethyl)thiazole monophosphate (THZ-P) and 2-methyl-4-amino-5-hydroxymethyl pyrimidine pyrophosphate (HMP-PP) to form thiamine monophosphate (TMP). In Anoxybacillus flavithermus (strain DSM 21510 / WK1), this protein is Thiamine-phosphate synthase.